A 363-amino-acid chain; its full sequence is uncharacterized protein (363 aa).

It belongs to the TelA family.

This is an uncharacterized protein from Bacillus subtilis (strain 168).